The following is a 610-amino-acid chain: Myoneurin (610 aa).

Residues 24 to 89 (CDCTIVIGEF…IYTGTLNLDS (66 aa)) form the BTB domain. The tract at residues 169-197 (QGALAKKSSQTKKKKKAFNSPKTGQNKTV) is disordered. 2 consecutive short sequence motifs (nuclear localization signal) follow at residues 174 to 190 (KKSS…NSPK) and 257 to 262 (KRKRGK). Residues 188–197 (SPKTGQNKTV) show a composition bias toward polar residues. At Ser-289 the chain carries Phosphoserine. C2H2-type zinc fingers lie at residues 302–324 (PMCN…MRIH), 330–352 (YVCH…VRTH), 358–381 (YKCE…RMHH), 387–409 (YKCD…ARKH), 415–437 (YVCD…VRRH), 443–465 (YVCD…SRKH), 471–493 (YICG…FRSH), and 499–522 (FICE…TKVH). The interval 521–556 (VHSGADKTLDSSAEDHTLSEQDSIQKSPLSETMDVK) is disordered. Positions 523–539 (SGADKTLDSSAEDHTLS) are enriched in basic and acidic residues. A compositionally biased stretch (polar residues) spans 540-550 (EQDSIQKSPLS).

The protein belongs to the krueppel C2H2-type zinc-finger protein family. In terms of tissue distribution, mainly expressed in the neuromuscular system. Located in and around synaptic myonuclei in adult muscle. Expression is dysregulated after nerve injury. Also found in the testis, ovary and placenta.

It is found in the nucleus. This Homo sapiens (Human) protein is Myoneurin (MYNN).